The sequence spans 400 residues: tRNA-specific 2-thiouridylase MnmA (400 aa).

ATP is bound by residues 19–26 and Leu45; that span reads AMSGGVDS. Cys113 functions as the Nucleophile in the catalytic mechanism. Cys113 and Cys210 are disulfide-bonded. An ATP-binding site is contributed by Gly137. The interaction with tRNA stretch occupies residues 160 to 162; sequence RDQ. Cys210 (cysteine persulfide intermediate) is an active-site residue.

It belongs to the MnmA/TRMU family.

It is found in the cytoplasm. It carries out the reaction S-sulfanyl-L-cysteinyl-[protein] + uridine(34) in tRNA + AH2 + ATP = 2-thiouridine(34) in tRNA + L-cysteinyl-[protein] + A + AMP + diphosphate + H(+). Its function is as follows. Catalyzes the 2-thiolation of uridine at the wobble position (U34) of tRNA, leading to the formation of s(2)U34. The sequence is that of tRNA-specific 2-thiouridylase MnmA from Rhodopseudomonas palustris (strain BisA53).